The primary structure comprises 412 residues: Serine hydroxymethyltransferase (412 aa).

Residues Leu-117 and 121–123 each bind (6S)-5,6,7,8-tetrahydrofolate; that span reads GHL. Lys-226 bears the N6-(pyridoxal phosphate)lysine mark.

Belongs to the SHMT family. Homodimer. It depends on pyridoxal 5'-phosphate as a cofactor.

Its subcellular location is the cytoplasm. It catalyses the reaction (6R)-5,10-methylene-5,6,7,8-tetrahydrofolate + glycine + H2O = (6S)-5,6,7,8-tetrahydrofolate + L-serine. The protein operates within one-carbon metabolism; tetrahydrofolate interconversion. Its pathway is amino-acid biosynthesis; glycine biosynthesis; glycine from L-serine: step 1/1. In terms of biological role, catalyzes the reversible interconversion of serine and glycine with tetrahydrofolate (THF) serving as the one-carbon carrier. This reaction serves as the major source of one-carbon groups required for the biosynthesis of purines, thymidylate, methionine, and other important biomolecules. Also exhibits THF-independent aldolase activity toward beta-hydroxyamino acids, producing glycine and aldehydes, via a retro-aldol mechanism. In Staphylococcus aureus (strain USA300), this protein is Serine hydroxymethyltransferase.